The chain runs to 945 residues: Netrin receptor UNC5B (945 aa).

An N-terminal signal peptide occupies residues 1-26; that stretch reads MGARSGARGALLLALLLCWDPRLSQA. At 27–377 the chain is on the extracellular side; the sequence is GTDSGSEVLP…LEASGDAALY (351 aa). An Ig-like domain is found at 48 to 145; it reads PYFLQEPQDA…AGTTKSRRAY (98 aa). 9 disulfide bridges follow: Cys69-Cys130, Cys81-Cys128, Cys174-Cys225, Cys258-Cys295, Cys262-Cys299, Cys273-Cys285, Cys314-Cys348, Cys318-Cys353, and Cys326-Cys338. An Ig-like C2-type domain is found at 147–242; it reads RIAYLRKNFD…KRRSTTATVI (96 aa). N-linked (GlcNAc...) asparagine glycosylation is present at Asn222. 2 TSP type-1 domains span residues 246–300 and 302–354; these read NGGW…TICP and DGAW…GLCM. Residue Asn347 is glycosylated (N-linked (GlcNAc...) asparagine). A helical membrane pass occupies residues 378-398; it reads AGLVVAIFVVVAILMAVGVVV. The Cytoplasmic portion of the chain corresponds to 399 to 945; sequence YRRNCRDFDT…LVAVATDGDC (547 aa). Residue Cys403 is the site of S-palmitoyl cysteine attachment. The ZU5 domain occupies 543–686; that stretch reads SSVSGTFGCL…LGTYVFTGES (144 aa). The residue at position 581 (Tyr581) is a Phosphotyrosine. The UPA domain stretch occupies residues 689-838; it reads RSAVKRLQLA…AETPAGSLDT (150 aa). The interaction with DCC stretch occupies residues 707–725; the sequence is SLEYSLRVYCLEDTPVALK. One can recognise a Death domain in the interval 865 to 943; sequence KICNSLDAPN…EMLVAVATDG (79 aa).

Belongs to the unc-5 family. As to quaternary structure, interacts with the cytoplasmic part of DCC. Interacts with GNAI2 via its cytoplasmic part. Interacts (via death domain) with DAPK1 (via death domain). Interacts (via extracellular domain) with FLRT3 (via extracellular domain); the interaction is direct. Interacts (via extracellular domain) with FLRT2 and FLRT3 (via extracellular domain), but has higher affinity for FLRT3. Identified in a complex with FLRT3 and ADGRL3; does not interact with ADGRL3 by itself. In terms of processing, phosphorylated on cytoplasmic tyrosine residues. Post-translationally, proteolytically cleaved by caspases during apoptosis. The cleavage does not take place when the receptor is associated with netrin ligand. Its cleavage by caspases is required to induce apoptosis. Palmitoylation is required for pro-apoptotic activity, but not for location at lipid rafts. As to expression, highly expressed in brain. Also expressed at lower level in developing lung, cartilage, kidney and hematopoietic and immune tissues.

It is found in the cell membrane. It localises to the membrane raft. In terms of biological role, receptor for netrin required for axon guidance. Mediates axon repulsion of neuronal growth cones in the developing nervous system upon ligand binding. Axon repulsion in growth cones may be caused by its association with DCC that may trigger signaling for repulsion. Functions as a netrin receptor that negatively regulates vascular branching during angiogenesis. Mediates retraction of tip cell filopodia on endothelial growth cones in response to netrin. It also acts as a dependence receptor required for apoptosis induction when not associated with netrin ligand. Mediates apoptosis by activating DAPK1. In the absence of NTN1, activates DAPK1 by reducing its autoinhibitory phosphorylation at Ser-308 thereby increasing its catalytic activity. This Homo sapiens (Human) protein is Netrin receptor UNC5B (UNC5B).